The sequence spans 618 residues: Proline--tRNA ligase (618 aa).

It belongs to the class-II aminoacyl-tRNA synthetase family. ProS type 1 subfamily. In terms of assembly, homodimer.

The protein localises to the cytoplasm. It catalyses the reaction tRNA(Pro) + L-proline + ATP = L-prolyl-tRNA(Pro) + AMP + diphosphate. Its function is as follows. Catalyzes the attachment of proline to tRNA(Pro) in a two-step reaction: proline is first activated by ATP to form Pro-AMP and then transferred to the acceptor end of tRNA(Pro). As ProRS can inadvertently accommodate and process non-cognate amino acids such as alanine and cysteine, to avoid such errors it has two additional distinct editing activities against alanine. One activity is designated as 'pretransfer' editing and involves the tRNA(Pro)-independent hydrolysis of activated Ala-AMP. The other activity is designated 'posttransfer' editing and involves deacylation of mischarged Ala-tRNA(Pro). The misacylated Cys-tRNA(Pro) is not edited by ProRS. The polypeptide is Proline--tRNA ligase (Streptococcus pyogenes serotype M18 (strain MGAS8232)).